Consider the following 104-residue polypeptide: Thioredoxin 1 (104 aa).

The region spanning 2 to 104 (VKIVTSQAEF…LKQLIEKYAA (103 aa)) is the Thioredoxin domain. Residues cysteine 30 and cysteine 33 each act as nucleophile in the active site. Cysteine 30 and cysteine 33 are joined by a disulfide.

This sequence belongs to the thioredoxin family. Post-translationally, the disulfide bond between Cys-30 and Cys-33 acts as a redox-active center and is reduced by thioredoxin reductase TRXR.

It localises to the cytoplasm. Functionally, participates in various redox reactions through the reversible oxidation of its active center dithiol to a disulfide and catalyzes dithiol-disulfide exchange reactions. By modifying the redox status of targeted proteins, induces changes in their structure and activity. Reduces oxidized glutathione (GSSG), thereby acting as a backup for the glutathione redox system. Reduces nitroglutathione (GSNO), a compound involved in the transport of nitric oxide (NO). Also reduces oxidative stress by detoxifying hydrogen peroxide, tert-butyl hydroperoxide and cumene hydroperoxide. Activates ornithine aminotransferase OAT by reducing a disulfide bond in the substrate binding loop, thereby enhancing the affinity of OAT for its substrates. May reduce S-adenosyl-L-homocysteine hydrolase SAHH. The sequence is that of Thioredoxin 1 from Plasmodium falciparum (isolate 3D7).